Consider the following 373-residue polypeptide: Glutamate 5-kinase (373 aa).

K15 is a binding site for ATP. Substrate contacts are provided by S55, D142, and N154. ATP is bound by residues 174–175 and 216–222; these read TD and TGGMATK. The PUA domain maps to 281–359; it reads AGSIVVDAGA…SEIEGILGFR (79 aa).

This sequence belongs to the glutamate 5-kinase family.

It is found in the cytoplasm. The enzyme catalyses L-glutamate + ATP = L-glutamyl 5-phosphate + ADP. It functions in the pathway amino-acid biosynthesis; L-proline biosynthesis; L-glutamate 5-semialdehyde from L-glutamate: step 1/2. Catalyzes the transfer of a phosphate group to glutamate to form L-glutamate 5-phosphate. This Citrifermentans bemidjiense (strain ATCC BAA-1014 / DSM 16622 / JCM 12645 / Bem) (Geobacter bemidjiensis) protein is Glutamate 5-kinase.